A 139-amino-acid polypeptide reads, in one-letter code: Acidic phospholipase A2 BpPLA2-TXI (139 aa).

Positions M1–G16 are cleaved as a signal peptide. A disulfide bridge links C44 with C60. Ca(2+) contacts are provided by G45 and G47. H63 is a catalytic residue. D64 provides a ligand contact to Ca(2+). Disulfide bonds link C65/C139, C73/C97, and C91/C102.

It belongs to the phospholipase A2 family. Group II subfamily. D49 sub-subfamily. Ca(2+) is required as a cofactor. As to expression, expressed by the venom gland.

It is found in the secreted. The enzyme catalyses a 1,2-diacyl-sn-glycero-3-phosphocholine + H2O = a 1-acyl-sn-glycero-3-phosphocholine + a fatty acid + H(+). In terms of biological role, PLA2 catalyzes the calcium-dependent hydrolysis of the 2-acyl groups in 3-sn-phosphoglycerides. In Bothrops pauloensis (Neuwied's lancehead), this protein is Acidic phospholipase A2 BpPLA2-TXI.